A 218-amino-acid polypeptide reads, in one-letter code: 4-coumaroyl-homoserine lactone synthase (218 aa).

The protein belongs to the autoinducer synthase family.

It catalyses the reaction 4-coumaroyl-CoA + S-adenosyl-L-methionine = N-(4-coumaroyl)-L-homoserine lactone + S-methyl-5'-thioadenosine + CoA + H(+). Functionally, catalyzes the synthesis of 4-coumaroyl-homoserine lactone, a quorum-sensing (QS) autoinducer molecule which binds to RpaR transcriptional regulator to regulate expression of QS-dependent genes. The sequence is that of 4-coumaroyl-homoserine lactone synthase from Rhodopseudomonas palustris (strain ATCC BAA-98 / CGA009).